The following is a 410-amino-acid chain: Putative competence-damage inducible protein (410 aa).

The protein belongs to the CinA family.

This Finegoldia magna (strain ATCC 29328 / DSM 20472 / WAL 2508) (Peptostreptococcus magnus) protein is Putative competence-damage inducible protein.